The chain runs to 128 residues: Protein ripply2 (128 aa).

Residues 1-64 are disordered; that stretch reads MDTTESAESA…ALPSGPGMAE (64 aa). Residues 17 to 28 show a composition bias toward low complexity; sequence PSRSRCPPSAQP. Positions 34-37 match the WRPW motif motif; the sequence is WRPW. The ripply homology domain stretch occupies residues 74 to 109; that stretch reads HPVRLFWPKSKCYDYLYQEAETLLKNFPIQATISFY.

The protein belongs to the ripply family. In terms of tissue distribution, expressed in the embryonic anterior presomitic mesoderm. First expressed in S-I at 8.5 dpc, where expression is maintained until 13.5 dpc, with an additional stripe of expression sometimes seen in the rostral part of S0 and S-I.

It localises to the nucleus. In terms of biological role, plays a role in somitogenesis. Required for somite segregation and establishment of rostrocaudal polarity in somites. The chain is Protein ripply2 from Mus musculus (Mouse).